Here is a 313-residue protein sequence, read N- to C-terminus: Olfactory receptor 51A4 (313 aa).

The Extracellular portion of the chain corresponds to 1–27 (MSIINTSYVEITTFFLVGMPGLEYAHI). An N-linked (GlcNAc...) asparagine glycan is attached at N5. Residues 28-48 (WISIPICSMYLIAILGNGTIL) traverse the membrane as a helical segment. Residues 49 to 56 (FIIKTEPS) are Cytoplasmic-facing. A helical transmembrane segment spans residues 57 to 77 (LHEPMYYFLSMLAMSDLGLSL). The Extracellular portion of the chain corresponds to 78–101 (SSLPTVLSIFLFNAPEISSNACFA). C99 and C191 are joined by a disulfide. The helical transmembrane segment at 102–122 (QEFFIHGFSVLESSVLLIMSF) threads the bilayer. Topologically, residues 123–141 (DRFLAIHNPLRYTSILTTV) are cytoplasmic. A helical transmembrane segment spans residues 142-162 (RVAQIGIVFSFKSMLLVLPFP). The Extracellular portion of the chain corresponds to 163 to 198 (FTLRNLRYCKKNQLSHSYCLHQDVMKLACSDNRIDV). A helical transmembrane segment spans residues 199 to 218 (IYGFFGALCLMVDFILIAVS). Over 219 to 238 (YTLILKTVLGIASKKEQLKA) the chain is Cytoplasmic. A helical membrane pass occupies residues 239 to 259 (LNTCVSHICAVIIFYLPIINL). Over 260–274 (AVVHRFARHVSPLIN) the chain is Extracellular. The chain crosses the membrane as a helical span at residues 275–295 (VLMANVLLLVPPLTNPIVYCV). Residues 296 to 313 (KTKQIRVRVVAKLCQRKI) are Cytoplasmic-facing.

The protein belongs to the G-protein coupled receptor 1 family.

It localises to the cell membrane. Functionally, odorant receptor. This is Olfactory receptor 51A4 (OR51A4) from Homo sapiens (Human).